A 101-amino-acid chain; its full sequence is Small ribosomal subunit protein uS14A (101 aa).

Residues 31–73 (IKSPSTTPEARVAAQSELNRQPRDASPVRVRNRDSVDGRPRGH) form a disordered region. Basic and acidic residues predominate over residues 61 to 70 (RNRDSVDGRP).

Belongs to the universal ribosomal protein uS14 family. In terms of assembly, part of the 30S ribosomal subunit. Contacts proteins S3 and S10.

Functionally, binds 16S rRNA, required for the assembly of 30S particles and may also be responsible for determining the conformation of the 16S rRNA at the A site. The protein is Small ribosomal subunit protein uS14A of Mycolicibacterium vanbaalenii (strain DSM 7251 / JCM 13017 / BCRC 16820 / KCTC 9966 / NRRL B-24157 / PYR-1) (Mycobacterium vanbaalenii).